Reading from the N-terminus, the 500-residue chain is MGLPGRRNPLLSARRAAASLRRSRRLPVYVAAVFFVASVLLMFRDEILYLTTARSPSSSLPTTGGSAGGAGLARKEELVSVNKPVLLGHGGKPEKHHSVTERHRPKVSAKRRPNKKAAKAARKKFMASPSVAAGAEVNVPETCNLSKGKWVFDNATYPLYREQECEYLTAQVTCTRNGRRDDGYQKWRWQPRDCDLPLAFDARLFMERLRGKRLMFVGDSLNRNQWESMVCLVRPALSPGKSYVTWWDGQRVVLHAWEYNATVEFYWAPFLVESNSDDPKAHSIRDRVIKPEAIAAHAGDWVGVDYLVFNTYIWWMNTVNMKVVRPTGKTWEEYDEVGRIEAYRRVLDTWATWVNDNVDPARTSVFFMSVSPLHISPEAWGNPGGVRCAKEDAPVQNWHGPLWLGTDWDMFRAARNASRAAGRVPVTFVDVTAMSELRKDGHTSVHTIRQGRVLTPEQQADPATYADCIHWCLPGVPDVWNLMLYARILSRPPAAAGHVA.

At 1-25 (MGLPGRRNPLLSARRAAASLRRSRR) the chain is on the cytoplasmic side. Residues 26 to 43 (LPVYVAAVFFVASVLLMF) form a helical; Signal-anchor for type II membrane protein membrane-spanning segment. Topologically, residues 44–500 (RDEILYLTTA…RPPAAAGHVA (457 aa)) are lumenal. The disordered stretch occupies residues 84–116 (PVLLGHGGKPEKHHSVTERHRPKVSAKRRPNKK). Residues 91 to 102 (GKPEKHHSVTER) are compositionally biased toward basic and acidic residues. Positions 103–116 (HRPKVSAKRRPNKK) are enriched in basic residues. Disulfide bonds link cysteine 143/cysteine 194, cysteine 165/cysteine 231, cysteine 174/cysteine 472, and cysteine 388/cysteine 468. Residues asparagine 144 and asparagine 154 are each glycosylated (N-linked (GlcNAc...) asparagine). Residues 218-220 (GDS) carry the GDS motif motif. Catalysis depends on serine 220, which acts as the Nucleophile. N-linked (GlcNAc...) asparagine glycans are attached at residues asparagine 260 and asparagine 416. Aspartate 467 functions as the Proton donor in the catalytic mechanism. Residues 467–470 (DCIH) carry the DXXH motif motif. Catalysis depends on histidine 470, which acts as the Proton acceptor.

It belongs to the PC-esterase family. TBL subfamily. Expressed at low levels in roots and leaves.

The protein resides in the golgi apparatus membrane. Xylan acetyltransferase required for 2-O- and 3-O-monoacetylation of xylosyl residues in xylan. Catalyzes the 2-O-acetylation of xylan, followed by nonenzymatic acetyl migration to the O-3 position, resulting in products that are monoacetylated at both O-2 and O-3 positions. The protein is Xylan O-acetyltransferase 2 of Oryza sativa subsp. japonica (Rice).